The following is a 327-amino-acid chain: S-adenosylmethionine/S-adenosylhomocysteine transporter (327 aa).

Helical transmembrane passes span 22–42 (CDMA…SFAL), 53–73 (LFVT…LLLC), 85–105 (IMPI…LEFI), 114–134 (TACF…YVQL), 143–163 (LGGL…GGSE), 165–185 (VAEW…ATCL), 202–222 (SLSM…LSLI), 240–260 (LFLQ…YNLF), 271–291 (FLSF…WLLL), and 294–314 (SFPP…RLIY). One can recognise an EamA 1 domain in the interval 34-157 (FIWSSSFALS…LGLVSYLVYL (124 aa)). The EamA 2 domain occupies 189–313 (GWTLLRKLGR…GFMVLGCRLI (125 aa)).

This sequence belongs to the drug/metabolite transporter (DMT) superfamily. 10 TMS drug/metabolite exporter (DME) (TC 2.A.7.3) family.

The protein localises to the cell membrane. Functionally, transports S-adenosylmethionine (SAM) and S-adenosylhomocysteine (SAH). Allows bacteria to acquire SAM from the eukaryotic host cell and to likely remove the toxic by-product SAH. The protein is S-adenosylmethionine/S-adenosylhomocysteine transporter of Chlamydia trachomatis serovar D (strain ATCC VR-885 / DSM 19411 / UW-3/Cx).